Consider the following 164-residue polypeptide: Cell division protein SepF (164 aa).

A disordered region spans residues 21–71 (YQQGQQPAQQQQSPVQAVPTPVPAPQQQAKRAPVTPLHKPSTTTRNAAPAE). Low complexity predominate over residues 22–49 (QQGQQPAQQQQSPVQAVPTPVPAPQQQA).

The protein belongs to the SepF family. As to quaternary structure, homodimer. Interacts with FtsZ.

The protein resides in the cytoplasm. In terms of biological role, cell division protein that is part of the divisome complex and is recruited early to the Z-ring. Probably stimulates Z-ring formation, perhaps through the cross-linking of FtsZ protofilaments. Its function overlaps with FtsA. The polypeptide is Cell division protein SepF (Clavibacter sepedonicus (Clavibacter michiganensis subsp. sepedonicus)).